Reading from the N-terminus, the 321-residue chain is Putative sulfotransferase vep-2 (321 aa).

A helical membrane pass occupies residues 11-31 (IARVLIIIASISVICITLFIS).

The protein to C.elegans C41C4.1 and C18B2.2.

The protein localises to the membrane. This Caenorhabditis elegans protein is Putative sulfotransferase vep-2.